A 73-amino-acid chain; its full sequence is Small ribosomal subunit protein bS18 (73 aa).

It belongs to the bacterial ribosomal protein bS18 family. As to quaternary structure, part of the 30S ribosomal subunit. Forms a tight heterodimer with protein bS6.

Functionally, binds as a heterodimer with protein bS6 to the central domain of the 16S rRNA, where it helps stabilize the platform of the 30S subunit. In Prochlorococcus marinus (strain SARG / CCMP1375 / SS120), this protein is Small ribosomal subunit protein bS18.